A 756-amino-acid polypeptide reads, in one-letter code: Catalase-peroxidase (756 aa).

The segment at residues 91 to 244 is a cross-link (tryptophyl-tyrosyl-methioninium (Trp-Tyr) (with M-270)); that stretch reads WHSAGTYRTG…LAAVQMGLIY (154 aa). His92 (proton acceptor) is an active-site residue. The tract at residues 198–230 is disordered; the sequence is AQKKMQQPGDGTLVAEPENHANEESRTASGERN. The span at 214 to 223 shows a compositional bias: basic and acidic residues; it reads PENHANEESR. The tryptophyl-tyrosyl-methioninium (Tyr-Met) (with W-91) cross-link spans 244-270; that stretch reads YVNPEGPEGVPDPVASAKDIRETFGRM. A heme b-binding site is contributed by His285. The disordered stretch occupies residues 371-390; sequence KNGAGAGKIPDAHDPSKRHA.

Belongs to the peroxidase family. Peroxidase/catalase subfamily. As to quaternary structure, homodimer or homotetramer. Heme b serves as cofactor. Post-translationally, formation of the three residue Trp-Tyr-Met cross-link is important for the catalase, but not the peroxidase activity of the enzyme.

The catalysed reaction is H2O2 + AH2 = A + 2 H2O. It carries out the reaction 2 H2O2 = O2 + 2 H2O. In terms of biological role, bifunctional enzyme with both catalase and broad-spectrum peroxidase activity. This chain is Catalase-peroxidase, found in Pseudomonas savastanoi pv. phaseolicola (strain 1448A / Race 6) (Pseudomonas syringae pv. phaseolicola (strain 1448A / Race 6)).